The primary structure comprises 320 residues: MIKKIGVLTSGGDAPGMNAAIRGVVRTALSEKLEVFGIYDGYLGLYENRMTLLDRYSVSDMINRGGTFLGSARFPGFYKNEIRTIAVNNLNKRNIDALVVIGGDGSYIGAQKLTKMGIPCISIPGTIDNDVAGTDYTIGYFTALETVVEAIDRLRDTSSSHQRISIVEVMGRYCGDLTLAAAIAGGCEFIVLPEIHYKKEELVSEIQAGIEKGKKHAIVAITEYICDVEKLAKYIEKKTNRETRATILGHIQRGGAPVVYDRILASRMGAYAVELLIEGYKGKCVGIQNEKMVFNDITDALKNMKRVFKKDWLITAKKLY.

Gly-12 serves as a coordination point for ATP. Residues 22 to 26 (RGVVR) and 55 to 60 (RYSVSD) each bind ADP. Residues 73 to 74 (RF) and 103 to 106 (GDGS) contribute to the ATP site. Asp-104 provides a ligand contact to Mg(2+). A substrate-binding site is contributed by 126–128 (TID). The Proton acceptor role is filled by Asp-128. ADP is bound at residue Arg-155. Residues Arg-163 and 170-172 (MGR) contribute to the substrate site. Residues 186-188 (GCE), Lys-212, and 214-216 (KKH) each bind ADP. Substrate is bound by residues Glu-223, Arg-244, and 250–253 (HIQR).

The protein belongs to the phosphofructokinase type A (PFKA) family. ATP-dependent PFK group I subfamily. Prokaryotic clade 'B1' sub-subfamily. As to quaternary structure, homotetramer. Requires Mg(2+) as cofactor.

Its subcellular location is the cytoplasm. It carries out the reaction beta-D-fructose 6-phosphate + ATP = beta-D-fructose 1,6-bisphosphate + ADP + H(+). Its pathway is carbohydrate degradation; glycolysis; D-glyceraldehyde 3-phosphate and glycerone phosphate from D-glucose: step 3/4. Its activity is regulated as follows. Allosterically activated by ADP and other diphosphonucleosides, and allosterically inhibited by phosphoenolpyruvate. Catalyzes the phosphorylation of D-fructose 6-phosphate to fructose 1,6-bisphosphate by ATP, the first committing step of glycolysis. In Buchnera aphidicola subsp. Schizaphis graminum (strain Sg), this protein is ATP-dependent 6-phosphofructokinase.